The chain runs to 498 residues: Glycylpeptide N-tetradecanoyltransferase 2 (498 aa).

The interval 1–87 is disordered; that stretch reads MAEDSESAAS…QPPSKNSTIP (87 aa). Over residues 15-32 the composition is skewed to acidic residues; sequence ELDDQDTCGIDGDNEEET. At S38 the chain carries Phosphoserine. The segment covering 46-57 has biased composition (basic residues); that stretch reads KKKKKKQKRKKE. The segment covering 61–72 has biased composition (polar residues); it reads SGGTKSDSASDS. Tetradecanoyl-CoA-binding residues include H117, W122, L250, V252, S258, R260, V261, and A262.

The protein belongs to the NMT family.

The protein localises to the cytoplasm. It is found in the membrane. The enzyme catalyses N-terminal glycyl-[protein] + tetradecanoyl-CoA = N-tetradecanoylglycyl-[protein] + CoA + H(+). The catalysed reaction is N-terminal glycyl-L-lysyl-[protein] + tetradecanoyl-CoA = N-terminal glycyl-(N(6)-tetradecanoyl)-L-lysyl-[protein] + CoA + H(+). Its function is as follows. Adds a myristoyl group to the N-terminal glycine residue of certain cellular and viral proteins. Also able to mediate N-terminal lysine myristoylation of proteins: catalyzes myristoylation of ARF6 on both 'Gly-2' and 'Lys-3'. Lysine myristoylation is required to maintain ARF6 on membranes during the GTPase cycle. The protein is Glycylpeptide N-tetradecanoyltransferase 2 (NMT2) of Bos taurus (Bovine).